A 221-amino-acid polypeptide reads, in one-letter code: Protein-disulfide oxidoreductase DsbI (221 aa).

The chain crosses the membrane as a helical span at residues 27–47; sequence FLWLLMAVAMGGLIILAHSFF. Residues C56 and C59 are joined by a disulfide bond. The next 2 helical transmembrane spans lie at 64–84 and 85–105; these read FAMFVMVFGGLIAAINPKNII and LKLIGCLAAFYGSIMGIKFSV. C128 and C154 are oxidised to a cystine. The helical transmembrane segment at 189–209 threads the bilayer; it reads LAFYEYGAGVPAGVWAMFCTV.

The protein belongs to the DsbB family. DsbI subfamily. In terms of assembly, interacts with DsbL.

It is found in the cell inner membrane. Its function is as follows. Required for disulfide bond formation in some proteins. Part of a redox system composed of DsbI and DsbL that mediates formation of an essential disulfide bond in AssT. The chain is Protein-disulfide oxidoreductase DsbI from Lelliottia amnigena (Enterobacter amnigenus).